Consider the following 150-residue polypeptide: 2-aminobenzenesulfonate 2,3-dioxygenase subunit beta (150 aa).

It belongs to the bacterial ring-hydroxylating dioxygenase beta subunit family. In terms of assembly, heterotetramer with a alpha2beta2 structure.

The enzyme catalyses 2-aminobenzenesulfonate + NADH + O2 + 2 H(+) = 2,3-dihydroxybenzenesulfonate + NH4(+) + NAD(+). Inhibited by o-phenanthroline. Its function is as follows. Beta subunit of the oxygenase component of the 2-aminobenzenesulfonate 2,3-dioxygenase system (deaminating) (ABSDOS). Can use 2-aminobenzenesulfonate (ABS), benzenesulfonate (BS), 4-toluenesulfonate (TS), 2-nitrobenzenesulfonate, 3- and 4-aminobenzenesulfonates, 4-chloro- and 4-hydroxybenzenesulfonates and pyridine-3-sulfonate as substrates. No desulfonation of ABS to aminocatechol or aminophenol detected. The protein is 2-aminobenzenesulfonate 2,3-dioxygenase subunit beta of Alcaligenes sp.